Reading from the N-terminus, the 539-residue chain is Chaperonin GroEL (539 aa).

ATP contacts are provided by residues 29–32, 86–90, G413, and D492; these read TLGP and DGTTT.

It belongs to the chaperonin (HSP60) family. As to quaternary structure, forms a cylinder of 14 subunits composed of two heptameric rings stacked back-to-back. Interacts with the co-chaperonin GroES.

The protein localises to the cytoplasm. The enzyme catalyses ATP + H2O + a folded polypeptide = ADP + phosphate + an unfolded polypeptide.. Functionally, together with its co-chaperonin GroES, plays an essential role in assisting protein folding. The GroEL-GroES system forms a nano-cage that allows encapsulation of the non-native substrate proteins and provides a physical environment optimized to promote and accelerate protein folding. This chain is Chaperonin GroEL, found in Fusobacterium nucleatum subsp. nucleatum (strain ATCC 25586 / DSM 15643 / BCRC 10681 / CIP 101130 / JCM 8532 / KCTC 2640 / LMG 13131 / VPI 4355).